The chain runs to 400 residues: Phosphoglycerate kinase (400 aa).

Substrate-binding positions include 24–26 (DFN), arginine 39, 62–65 (HFGR), arginine 121, and arginine 154. Residues lysine 205, glycine 296, glutamate 327, and 356–359 (GGDS) contribute to the ATP site.

It belongs to the phosphoglycerate kinase family. Monomer.

It localises to the cytoplasm. It carries out the reaction (2R)-3-phosphoglycerate + ATP = (2R)-3-phospho-glyceroyl phosphate + ADP. The protein operates within carbohydrate degradation; glycolysis; pyruvate from D-glyceraldehyde 3-phosphate: step 2/5. This is Phosphoglycerate kinase from Rippkaea orientalis (strain PCC 8801 / RF-1) (Cyanothece sp. (strain PCC 8801)).